The sequence spans 187 residues: Putative manganese efflux pump MntP (187 aa).

6 helical membrane passes run 3 to 23 (FYSLIFLSCALGMDAFAVSLC), 35 to 55 (HYLIVGIYFGGFQALMPTIGY), 56 to 76 (FIGITFASFIASIDHWIAFIL), 107 to 127 (LALAIATSIDALAVGVSFAFL), 129 to 149 (VNLLLAIFLIGIITFILCIIA), and 166 to 186 (LLGGLVLIILGVKILIEHLFF).

It belongs to the MntP (TC 9.B.29) family.

The protein resides in the cell inner membrane. Functionally, probably functions as a manganese efflux pump. The sequence is that of Putative manganese efflux pump MntP from Campylobacter jejuni subsp. doylei (strain ATCC BAA-1458 / RM4099 / 269.97).